We begin with the raw amino-acid sequence, 388 residues long: S-adenosylmethionine synthase (388 aa).

His-16 contacts ATP. Position 18 (Asp-18) interacts with Mg(2+). A K(+)-binding site is contributed by Glu-44. Residues Glu-57 and Gln-100 each contribute to the L-methionine site. The flexible loop stretch occupies residues Gln-100–Arg-110. ATP contacts are provided by residues Asp-165–Lys-167, Asp-240, Arg-246–Lys-247, Ala-263, and Lys-267. Asp-240 serves as a coordination point for L-methionine. An L-methionine-binding site is contributed by Lys-271.

The protein belongs to the AdoMet synthase family. As to quaternary structure, homotetramer; dimer of dimers. Mg(2+) is required as a cofactor. K(+) serves as cofactor.

The protein localises to the cytoplasm. It carries out the reaction L-methionine + ATP + H2O = S-adenosyl-L-methionine + phosphate + diphosphate. The protein operates within amino-acid biosynthesis; S-adenosyl-L-methionine biosynthesis; S-adenosyl-L-methionine from L-methionine: step 1/1. In terms of biological role, catalyzes the formation of S-adenosylmethionine (AdoMet) from methionine and ATP. The overall synthetic reaction is composed of two sequential steps, AdoMet formation and the subsequent tripolyphosphate hydrolysis which occurs prior to release of AdoMet from the enzyme. The protein is S-adenosylmethionine synthase of Acinetobacter baumannii (strain ACICU).